The following is a 104-amino-acid chain: Large ribosomal subunit protein uL24 (104 aa).

It belongs to the universal ribosomal protein uL24 family. Part of the 50S ribosomal subunit.

In terms of biological role, one of two assembly initiator proteins, it binds directly to the 5'-end of the 23S rRNA, where it nucleates assembly of the 50S subunit. One of the proteins that surrounds the polypeptide exit tunnel on the outside of the subunit. The polypeptide is Large ribosomal subunit protein uL24 (Idiomarina loihiensis (strain ATCC BAA-735 / DSM 15497 / L2-TR)).